Here is a 159-residue protein sequence, read N- to C-terminus: 6,7-dimethyl-8-ribityllumazine synthase (159 aa).

5-amino-6-(D-ribitylamino)uracil contacts are provided by residues Trp-28, Ala-59–Glu-61, and Cys-81–Ile-83. (2S)-2-hydroxy-3-oxobutyl phosphate is bound at residue Gly-86–Thr-87. His-89 acts as the Proton donor in catalysis. Asn-114 provides a ligand contact to 5-amino-6-(D-ribitylamino)uracil. Residue Arg-128 coordinates (2S)-2-hydroxy-3-oxobutyl phosphate.

Belongs to the DMRL synthase family.

The enzyme catalyses (2S)-2-hydroxy-3-oxobutyl phosphate + 5-amino-6-(D-ribitylamino)uracil = 6,7-dimethyl-8-(1-D-ribityl)lumazine + phosphate + 2 H2O + H(+). The protein operates within cofactor biosynthesis; riboflavin biosynthesis; riboflavin from 2-hydroxy-3-oxobutyl phosphate and 5-amino-6-(D-ribitylamino)uracil: step 1/2. Its function is as follows. Catalyzes the formation of 6,7-dimethyl-8-ribityllumazine by condensation of 5-amino-6-(D-ribitylamino)uracil with 3,4-dihydroxy-2-butanone 4-phosphate. This is the penultimate step in the biosynthesis of riboflavin. The chain is 6,7-dimethyl-8-ribityllumazine synthase from Corynebacterium kroppenstedtii (strain DSM 44385 / JCM 11950 / CIP 105744 / CCUG 35717).